A 448-amino-acid chain; its full sequence is Probable glycine dehydrogenase (decarboxylating) subunit 1 (448 aa).

This sequence belongs to the GcvP family. N-terminal subunit subfamily. In terms of assembly, the glycine cleavage system is composed of four proteins: P, T, L and H. In this organism, the P 'protein' is a heterodimer of two subunits.

It carries out the reaction N(6)-[(R)-lipoyl]-L-lysyl-[glycine-cleavage complex H protein] + glycine + H(+) = N(6)-[(R)-S(8)-aminomethyldihydrolipoyl]-L-lysyl-[glycine-cleavage complex H protein] + CO2. Its function is as follows. The glycine cleavage system catalyzes the degradation of glycine. The P protein binds the alpha-amino group of glycine through its pyridoxal phosphate cofactor; CO(2) is released and the remaining methylamine moiety is then transferred to the lipoamide cofactor of the H protein. The sequence is that of Probable glycine dehydrogenase (decarboxylating) subunit 1 from Listeria welshimeri serovar 6b (strain ATCC 35897 / DSM 20650 / CCUG 15529 / CIP 8149 / NCTC 11857 / SLCC 5334 / V8).